We begin with the raw amino-acid sequence, 20 residues long: Outer membrane protein 40Va (20 aa).

This sequence belongs to the Gram-negative porin family. Homotrimer.

Its subcellular location is the cell outer membrane. Functionally, forms pores that allow passive diffusion of small molecules across the outer membrane. This Vibrio alginolyticus protein is Outer membrane protein 40Va.